The primary structure comprises 78 residues: MNPMIEFCVSNLARGSQEALEILEKDPNLDVLEYGCLSYCGKCMESLFALVNGEVVTGGTPAELVDNIYTFIEENPMF.

It belongs to the UPF0349 family.

The polypeptide is UPF0349 protein RBAM_029300 (Bacillus velezensis (strain DSM 23117 / BGSC 10A6 / LMG 26770 / FZB42) (Bacillus amyloliquefaciens subsp. plantarum)).